A 163-amino-acid chain; its full sequence is uncharacterized protein (163 aa).

The protein belongs to the IMPDH/GMPR family.

This is an uncharacterized protein from Haemophilus influenzae (strain ATCC 51907 / DSM 11121 / KW20 / Rd).